Consider the following 477-residue polypeptide: Cysteine--tRNA ligase (477 aa).

Residue Cys-29 coordinates Zn(2+). The 'HIGH' region motif lies at 31–41; it reads PTVYNYFHVGN. Zn(2+)-binding residues include Cys-209, His-234, and Glu-238. The short motif at 267-271 is the 'KMSKS' region element; that stretch reads KMSKS. Lys-270 is a binding site for ATP.

The protein belongs to the class-I aminoacyl-tRNA synthetase family. In terms of assembly, monomer. It depends on Zn(2+) as a cofactor.

The protein resides in the cytoplasm. It catalyses the reaction tRNA(Cys) + L-cysteine + ATP = L-cysteinyl-tRNA(Cys) + AMP + diphosphate. The chain is Cysteine--tRNA ligase from Desulfitobacterium hafniense (strain DSM 10664 / DCB-2).